The primary structure comprises 201 residues: Recombination protein RecR (201 aa).

Residues 58 to 73 (CGRCGALTDVDPCGIC) form a C4-type zinc finger. The Toprim domain maps to 81 to 178 (ETLCLVSEWD…RVTRLAQGIP (98 aa)).

The protein belongs to the RecR family.

Its function is as follows. May play a role in DNA repair. It seems to be involved in an RecBC-independent recombinational process of DNA repair. It may act with RecF and RecO. This chain is Recombination protein RecR, found in Nitratidesulfovibrio vulgaris (strain DSM 19637 / Miyazaki F) (Desulfovibrio vulgaris).